The primary structure comprises 207 residues: Large ribosomal subunit protein uL4 (207 aa).

The disordered stretch occupies residues 48–87; the sequence is THAVKNRSAVSGGGKKPWRQKGTGRARQGSIRSPQFRGGG.

Belongs to the universal ribosomal protein uL4 family. Part of the 50S ribosomal subunit.

Functionally, one of the primary rRNA binding proteins, this protein initially binds near the 5'-end of the 23S rRNA. It is important during the early stages of 50S assembly. It makes multiple contacts with different domains of the 23S rRNA in the assembled 50S subunit and ribosome. Its function is as follows. Forms part of the polypeptide exit tunnel. This is Large ribosomal subunit protein uL4 from Limosilactobacillus reuteri subsp. reuteri (strain JCM 1112) (Lactobacillus reuteri).